We begin with the raw amino-acid sequence, 239 residues long: Ribosomal RNA small subunit methyltransferase G (239 aa).

S-adenosyl-L-methionine contacts are provided by residues Gly-77, Phe-82, 128–129 (AE), and Arg-146. The disordered stretch occupies residues 215–239 (DKRSQTPKKYPRKPGTPNKSPLLEK).

Belongs to the methyltransferase superfamily. RNA methyltransferase RsmG family.

It is found in the cytoplasm. Its function is as follows. Specifically methylates the N7 position of guanine in position 535 of 16S rRNA. This is Ribosomal RNA small subunit methyltransferase G from Staphylococcus saprophyticus subsp. saprophyticus (strain ATCC 15305 / DSM 20229 / NCIMB 8711 / NCTC 7292 / S-41).